The chain runs to 1198 residues: Structural polyprotein (1198 aa).

Positions 2-15 (TKKPGGPGKNRAIN) are interaction with host EXOC1. Over 2-109 (TKKPGGPGKN…RKQNKRGGNE (108 aa)) the chain is Cytoplasmic. The segment at 37 to 72 (LLDGRGPVRFVLALITFFKFTALAPTKALLGRWKAV) is hydrophobic; homodimerization of capsid protein C. Positions 106 to 127 (GGNEGSIMWLASLAVVIAYAGA) are cleaved as a propeptide — ER anchor for the capsid protein C, removed in mature form by serine protease NS3. The chain crosses the membrane as a helical span at residues 110-130 (GSIMWLASLAVVIAYAGAMKL). Residues 131-253 (SNFQGKLLMT…ATRYLMKTEN (123 aa)) are Extracellular-facing. An N-linked (GlcNAc...) asparagine; by host glycan is attached at N142. The helical transmembrane segment at 254–274 (WIIRNPGYAFLAATLGWMLGS) threads the bilayer. Residues 275 to 279 (NNGQR) lie on the Cytoplasmic side of the membrane. The chain crosses the membrane as a helical span at residues 280–294 (VVFTILLLLVAPAYS). The Extracellular portion of the chain corresponds to 295 to 746 (FNCLGMGNRD…QVFGGAFRTL (452 aa)). 6 disulfides stabilise this stretch: C297–C324, C354–C410, C354–C415, C368–C399, C386–C410, and C386–C415. The segment at 392 to 405 (DRGWGNGCGLFGKG) is fusion peptide. The N-linked (GlcNAc...) asparagine; by host glycan is linked to N448. 2 cysteine pairs are disulfide-bonded: C484–C581 and C598–C629. The chain crosses the membrane as a helical span at residues 747 to 767 (FGGMSWITQGLMGALLLWMGV). At 768-773 (NARDRS) the chain is on the cytoplasmic side. The chain crosses the membrane as a helical span at residues 774-794 (IALAFLATGGVLVFLATNVHA). The Extracellular portion of the chain corresponds to 795–1198 (DTGCAIDITR…CADAWGHHLH (404 aa)). Cystine bridges form between C798–C809, C849–C937, C973–C1017, C1074–C1123, C1085–C1106, and C1107–C1110. N-linked (GlcNAc...) asparagine; by host glycans are attached at residues N924 and N1001. The tract at residues 1152 to 1177 (VDPFSAGPSGDVSGHPGGPSQEVDGQ) is disordered.

In terms of assembly, homodimer. Interacts (via N-terminus) with host EXOC1 (via C-terminus); this interaction results in EXOC1 degradation through the proteasome degradation pathway. Interacts with host CAPRIN1; this interaction is involved in the suppression of the integrated stress response. Forms heterodimers with envelope protein E in the endoplasmic reticulum and Golgi. As to quaternary structure, homodimer; in the endoplasmic reticulum and Golgi. Interacts with protein prM. Interacts with non-structural protein 1. In terms of processing, genome polyprotein: Specific enzymatic cleavages in vivo yield mature proteins. Cleavages in the lumen of endoplasmic reticulum are performed by host signal peptidase, whereas cleavages in the cytoplasmic side are performed by serine protease NS3. Signal cleavage at the 2K-4B site requires a prior NS3 protease-mediated cleavage at the 4A-2K site. Post-translationally, cleaved in post-Golgi vesicles by a host furin, releasing the mature small envelope protein M, and peptide pr. This cleavage is incomplete as up to 30% of viral particles still carry uncleaved prM. N-glycosylated.

Its subcellular location is the secreted. It localises to the virion membrane. It is found in the host endoplasmic reticulum membrane. In terms of biological role, plays a role in virus budding by binding to the cell membrane and gathering the viral RNA into a nucleocapsid that forms the core of a mature virus particle. During virus entry, may induce genome penetration into the host cytoplasm after hemifusion induced by the surface proteins. Can migrate to the cell nucleus where it modulates host functions. Overcomes the anti-viral effects of host EXOC1 by sequestering and degrading the latter through the proteasome degradation pathway. Inhibits the integrated stress response (ISR) in the infected cell by binding to host CAPRIN1. Its function is as follows. Inhibits RNA silencing by interfering with host Dicer. Prevents premature fusion activity of envelope proteins in trans-Golgi by binding to envelope protein E at pH6.0. After virion release in extracellular space, gets dissociated from E dimers. Functionally, acts as a chaperone for envelope protein E during intracellular virion assembly by masking and inactivating envelope protein E fusion peptide. prM is the only viral peptide matured by host furin in the trans-Golgi network probably to avoid catastrophic activation of the viral fusion activity in acidic Golgi compartment prior to virion release. prM-E cleavage is inefficient, and many virions are only partially matured. These uncleaved prM would play a role in immune evasion. In terms of biological role, may play a role in virus budding. Exerts cytotoxic effects by activating a mitochondrial apoptotic pathway through M ectodomain. May display a viroporin activity. Its function is as follows. Binds to host cell surface receptor and mediates fusion between viral and cellular membranes. Envelope protein is synthesized in the endoplasmic reticulum in the form of heterodimer with protein prM. They play a role in virion budding in the ER, and the newly formed immature particle is covered with 60 spikes composed of heterodimer between precursor prM and envelope protein E. The virion is transported to the Golgi apparatus where the low pH causes dissociation of PrM-E heterodimers and formation of E homodimers. prM-E cleavage is inefficient, and many virions are only partially matured. These uncleaved prM would play a role in immune evasion. May play a role in neuroinvasiveness. The polypeptide is Structural polyprotein (Japanese encephalitis virus (strain Jaoars982) (JEV)).